A 212-amino-acid chain; its full sequence is Adenylate kinase (212 aa).

10–15 (GAGKGT) is a binding site for ATP. The NMP stretch occupies residues 30–59 (STGDMFRAAMANQTEMGRLAKSYIDKGELV). AMP-binding positions include Thr31, Arg36, 57–59 (ELV), 86–89 (GYPR), and Gln93. An LID region spans residues 127 to 159 (GRIINRKTGETFHKVFNPPVDYKEEDYYQREDD). Residues Arg128 and 137–138 (TF) contribute to the ATP site. AMP is bound by residues Arg156 and Arg167. Gln195 is an ATP binding site.

The protein belongs to the adenylate kinase family. As to quaternary structure, monomer.

It is found in the cytoplasm. The catalysed reaction is AMP + ATP = 2 ADP. Its pathway is purine metabolism; AMP biosynthesis via salvage pathway; AMP from ADP: step 1/1. In terms of biological role, catalyzes the reversible transfer of the terminal phosphate group between ATP and AMP. Plays an important role in cellular energy homeostasis and in adenine nucleotide metabolism. The polypeptide is Adenylate kinase (Streptococcus pyogenes serotype M5 (strain Manfredo)).